The chain runs to 672 residues: Probable copper-transporting P-type ATPase B (672 aa).

A compositionally biased stretch (basic and acidic residues) spans 1–17 (MEHHSHQEHENHTSHGN). Residues 1-22 (MEHHSHQEHENHTSHGNHEHHH) form a disordered region. A run of 6 helical transmembrane segments spans residues 30–50 (FFIS…MGVK), 55–75 (ISFT…FFYG), 93–113 (GMMT…LYAF), 125–145 (TMDF…GHWI), 282–302 (GYLF…WMLI), and 313–333 (LVTV…PLVT). D365 acts as the 4-aspartylphosphate intermediate in catalysis. D563 and D567 together coordinate Mg(2+). Helical transmembrane passes span 621 to 643 (LWWG…ASIG) and 647 to 669 (SPAV…AFTL).

This sequence belongs to the cation transport ATPase (P-type) (TC 3.A.3) family. Type IB subfamily.

Its subcellular location is the cell membrane. It carries out the reaction Cu(+)(in) + ATP + H2O = Cu(+)(out) + ADP + phosphate + H(+). Involved in copper transport. The protein is Probable copper-transporting P-type ATPase B (copB) of Staphylococcus aureus.